Here is a 452-residue protein sequence, read N- to C-terminus: 1-aminocyclopropane-1-carboxylate synthase 3 (452 aa).

An N6-(pyridoxal phosphate)lysine modification is found at K283.

The protein belongs to the class-I pyridoxal-phosphate-dependent aminotransferase family. Pyridoxal 5'-phosphate serves as cofactor. As to expression, expressed in leaves. Expressed in roots and leaf blades. Expressed at low levels in leaf sheaths and shoot bases.

The enzyme catalyses S-adenosyl-L-methionine = 1-aminocyclopropane-1-carboxylate + S-methyl-5'-thioadenosine + H(+). Its pathway is alkene biosynthesis; ethylene biosynthesis via S-adenosyl-L-methionine; ethylene from S-adenosyl-L-methionine: step 1/2. Catalyzes the formation of 1-aminocyclopropane-1-carboxylate, a direct precursor of ethylene in higher plants. The protein is 1-aminocyclopropane-1-carboxylate synthase 3 of Oryza sativa subsp. japonica (Rice).